A 375-amino-acid chain; its full sequence is Succinyl-diaminopimelate desuccinylase (375 aa).

His-66 serves as a coordination point for Zn(2+). The active site involves Asp-68. Asp-99 contributes to the Zn(2+) binding site. The active-site Proton acceptor is Glu-133. Positions 134, 162, and 348 each coordinate Zn(2+).

It belongs to the peptidase M20A family. DapE subfamily. As to quaternary structure, homodimer. Requires Zn(2+) as cofactor. It depends on Co(2+) as a cofactor.

It catalyses the reaction N-succinyl-(2S,6S)-2,6-diaminopimelate + H2O = (2S,6S)-2,6-diaminopimelate + succinate. Its pathway is amino-acid biosynthesis; L-lysine biosynthesis via DAP pathway; LL-2,6-diaminopimelate from (S)-tetrahydrodipicolinate (succinylase route): step 3/3. Its function is as follows. Catalyzes the hydrolysis of N-succinyl-L,L-diaminopimelic acid (SDAP), forming succinate and LL-2,6-diaminopimelate (DAP), an intermediate involved in the bacterial biosynthesis of lysine and meso-diaminopimelic acid, an essential component of bacterial cell walls. The protein is Succinyl-diaminopimelate desuccinylase of Alkalilimnicola ehrlichii (strain ATCC BAA-1101 / DSM 17681 / MLHE-1).